We begin with the raw amino-acid sequence, 239 residues long: tRNA (guanine-N(7)-)-methyltransferase (239 aa).

S-adenosyl-L-methionine-binding residues include Glu-69, Glu-94, Asp-121, and Asp-144. Asp-144 is a catalytic residue. Lys-148 is a binding site for substrate. An interaction with RNA region spans residues 150 to 155; that stretch reads RHNKRR. Substrate is bound by residues Asp-180 and 217–220; that span reads TKFE.

This sequence belongs to the class I-like SAM-binding methyltransferase superfamily. TrmB family. As to quaternary structure, monomer.

The catalysed reaction is guanosine(46) in tRNA + S-adenosyl-L-methionine = N(7)-methylguanosine(46) in tRNA + S-adenosyl-L-homocysteine. Its pathway is tRNA modification; N(7)-methylguanine-tRNA biosynthesis. Functionally, catalyzes the formation of N(7)-methylguanine at position 46 (m7G46) in tRNA. The sequence is that of tRNA (guanine-N(7)-)-methyltransferase from Serratia proteamaculans (strain 568).